The following is a 1130-amino-acid chain: MHC class II transactivator (1130 aa).

The segment at 94-132 is required for acetyltransferase activity; sequence AYANIAELDQYVFQDSQLEGLSKDIFKHIGPDEVIGESM. Residues 269-303 are disordered; sequence PSGFTVHGLPTSPDRPGSTSPFAPSATDLPSMPEP. Positions 414–724 constitute an NACHT domain; that stretch reads RVIAVLGKAG…CFLGALWLAL (311 aa). Position 420–427 (420–427) interacts with GTP; it reads GKAGQGKS. LRR repeat units follow at residues 985–1008, 1016–1037, 1045–1066, and 1073–1093; these read SLQHLDLDALSENKIGDEGVSQLS, SLETLNLSQNNITDLGAYKLAE, SLLRLSLYNNCICDVGAESLAR, and SLRVMDVQYNKFTAAGAQQLA.

As to quaternary structure, interacts with ZXDA and ZXDC. Interacts with PML (isoform PML-2). Interacts with TAF7; interaction inhibits CIITA acetyltransferase activity, thereby repressing transcription. In terms of processing, autophosphorylated, affecting interaction with TAF7.

It localises to the nucleus. The protein localises to the PML body. The catalysed reaction is L-seryl-[protein] + ATP = O-phospho-L-seryl-[protein] + ADP + H(+). It carries out the reaction L-threonyl-[protein] + ATP = O-phospho-L-threonyl-[protein] + ADP + H(+). In terms of biological role, essential for transcriptional activity of the HLA class II promoter; activation is via the proximal promoter. Does not bind DNA. May act in a coactivator-like fashion through protein-protein interactions by contacting factors binding to the proximal MHC class II promoter, to elements of the transcription machinery, or both PubMed:8402893, PubMed:7749984,. Alternatively it may activate HLA class II transcription by modifying proteins that bind to the MHC class II promoter. Also mediates enhanced MHC class I transcription; the promoter element requirements for CIITA-mediated transcription are distinct from those of constitutive MHC class I transcription, and CIITA can functionally replace TAF1 at these genes. Activates CD74 transcription. Exhibits intrinsic GTP-stimulated acetyltransferase activity. Exhibits serine/threonine protein kinase activity: can phosphorylate the TFIID component TAF7, the RAP74 subunit of the general transcription factor TFIIF, histone H2B at 'Ser-37' and other histones (in vitro). Has antiviral activity against Ebola virus and coronaviruses, including SARS-CoV-2. Induces resistance by up-regulation of the p41 isoform of CD74, which blocks cathepsin-mediated cleavage of viral glycoproteins, thereby preventing viral fusion. Functionally, exhibits dominant-negative suppression of MHC class II gene expression. This chain is MHC class II transactivator, found in Homo sapiens (Human).